The primary structure comprises 94 residues: uncharacterized protein (94 aa).

The disordered stretch occupies residues Met1 to Ser23.

This is an uncharacterized protein from Homo sapiens (Human).